The following is a 546-amino-acid chain: CTP synthase (546 aa).

The amidoligase domain stretch occupies residues 1 to 266 (MTTNYIFVTG…DDLVCTRFGI (266 aa)). Ser14 lines the CTP pocket. UTP is bound at residue Ser14. ATP contacts are provided by residues 15-20 (SLGKGI) and Asp72. The Mg(2+) site is built by Asp72 and Glu140. Residues 147-149 (DIE), 187-192 (KTKPTQ), and Lys223 each bind CTP. Residues 187–192 (KTKPTQ) and Lys223 each bind UTP. 239–241 (KDV) is a binding site for ATP. One can recognise a Glutamine amidotransferase type-1 domain in the interval 291–542 (TIGMVGKYIE…VKAAGQYSRG (252 aa)). Position 352 (Gly352) interacts with L-glutamine. The active-site Nucleophile; for glutamine hydrolysis is the Cys379. Residues 380–383 (LGMQ), Glu403, and Arg470 each bind L-glutamine. Active-site residues include His515 and Glu517.

The protein belongs to the CTP synthase family. As to quaternary structure, homotetramer.

It carries out the reaction UTP + L-glutamine + ATP + H2O = CTP + L-glutamate + ADP + phosphate + 2 H(+). The enzyme catalyses L-glutamine + H2O = L-glutamate + NH4(+). The catalysed reaction is UTP + NH4(+) + ATP = CTP + ADP + phosphate + 2 H(+). It participates in pyrimidine metabolism; CTP biosynthesis via de novo pathway; CTP from UDP: step 2/2. Allosterically activated by GTP, when glutamine is the substrate; GTP has no effect on the reaction when ammonia is the substrate. The allosteric effector GTP functions by stabilizing the protein conformation that binds the tetrahedral intermediate(s) formed during glutamine hydrolysis. Inhibited by the product CTP, via allosteric rather than competitive inhibition. Catalyzes the ATP-dependent amination of UTP to CTP with either L-glutamine or ammonia as the source of nitrogen. Regulates intracellular CTP levels through interactions with the four ribonucleotide triphosphates. In Vibrio parahaemolyticus serotype O3:K6 (strain RIMD 2210633), this protein is CTP synthase.